A 138-amino-acid chain; its full sequence is uncharacterized protein (138 aa).

The next 3 membrane-spanning stretches (helical) occupy residues 17 to 37, 43 to 63, and 117 to 137; these read LIVSTIYIVLFFAILNLTVFF, INLILKNSCVVSFVVVWLLVC, and FWWMNFSLYLLGSLISIVVSL.

Its subcellular location is the cell membrane. This is an uncharacterized protein from Mycoplasma pneumoniae (strain ATCC 29342 / M129 / Subtype 1) (Mycoplasmoides pneumoniae).